We begin with the raw amino-acid sequence, 724 residues long: Ribosomal protein S6 kinase alpha-1 (724 aa).

Ser54 is modified (phosphoserine). The Protein kinase 1 domain occupies 62-310 (FELLKVLGQG…AEEIKRHIFY (249 aa)). ATP-binding positions include 68–76 (LGQGSFGKV) and Lys94. The Proton acceptor role is filled by Asp187. Phosphoserine; by PDPK1 is present on Ser221. Residue Ser296 is modified to Phosphoserine. Residues 311-380 (STIDWNKLYR…VATGLMEDDG (70 aa)) form the AGC-kinase C-terminal domain. Thr348 bears the Phosphothreonine mark. Phosphoserine occurs at positions 352, 358, and 369. The 258-residue stretch at 407–664 (YVVKETIGVG…AKQVLQHPWI (258 aa)) folds into the Protein kinase 2 domain. Residues 413 to 421 (IGVGSYSVC) and Lys436 each bind ATP. Asp524 functions as the Proton acceptor in the catalytic mechanism. Phosphothreonine is present on Thr562. The residue at position 721 (Ser721) is a Phosphoserine.

The protein belongs to the protein kinase superfamily. AGC Ser/Thr protein kinase family. S6 kinase subfamily. Forms a complex with either MAPK1/ERK2 or MAPK3/ERK1 in quiescent cells. Transiently dissociates following mitogenic stimulation. Interacts with ETV1/ER81 and FGFR1. Requires Mg(2+) as cofactor. In terms of processing, activated by phosphorylation at Ser-221 by PDPK1. Autophosphorylated on Ser-369, as part of the activation process. May be phosphorylated at Thr-348 and Ser-352 by MAPK1/ERK2 and MAPK3/ERK1. Post-translationally, N-terminal myristoylation results in an activated kinase in the absence of added growth factors. As to expression, intestine, thymus, and lung.

Its subcellular location is the nucleus. It is found in the cytoplasm. It catalyses the reaction L-seryl-[protein] + ATP = O-phospho-L-seryl-[protein] + ADP + H(+). The catalysed reaction is L-threonyl-[protein] + ATP = O-phospho-L-threonyl-[protein] + ADP + H(+). Upon extracellular signal or mitogen stimulation, phosphorylated at Thr-562 in the C-terminal kinase domain (CTKD) by MAPK1/ERK2 and MAPK3/ERK1. The activated CTKD then autophosphorylates Ser-369, allowing binding of PDPK1, which in turn phosphorylates Ser-221 in the N-terminal kinase domain (NTDK) leading to the full activation of the protein and subsequent phosphorylation of the substrates by the NTKD. Its function is as follows. Serine/threonine-protein kinase that acts downstream of ERK (MAPK1/ERK2 and MAPK3/ERK1) signaling and mediates mitogenic and stress-induced activation of the transcription factors CREB1, ETV1/ER81 and NR4A1/NUR77, regulates translation through RPS6 and EIF4B phosphorylation, and mediates cellular proliferation, survival, and differentiation by modulating mTOR signaling and repressing pro-apoptotic function of BAD and DAPK1. In fibroblast, is required for EGF-stimulated phosphorylation of CREB1, which results in the subsequent transcriptional activation of several immediate-early genes. In response to mitogenic stimulation (EGF and PMA), phosphorylates and activates NR4A1/NUR77 and ETV1/ER81 transcription factors and the cofactor CREBBP. Upon insulin-derived signal, acts indirectly on the transcription regulation of several genes by phosphorylating GSK3B at 'Ser-9' and inhibiting its activity. Phosphorylates RPS6 in response to serum or EGF via an mTOR-independent mechanism and promotes translation initiation by facilitating assembly of the pre-initiation complex. In response to insulin, phosphorylates EIF4B, enhancing EIF4B affinity for the EIF3 complex and stimulating cap-dependent translation. Is involved in the mTOR nutrient-sensing pathway by directly phosphorylating TSC2 at 'Ser-1798', which potently inhibits TSC2 ability to suppress mTOR signaling, and mediates phosphorylation of RPTOR, which regulates mTORC1 activity and may promote rapamycin-sensitive signaling independently of the PI3K/AKT pathway. Also involved in feedback regulation of mTORC1 and mTORC2 by phosphorylating DEPTOR. Mediates cell survival by phosphorylating the pro-apoptotic proteins BAD and DAPK1 and suppressing their pro-apoptotic function. Promotes the survival of hepatic stellate cells by phosphorylating CEBPB in response to the hepatotoxin carbon tetrachloride (CCl4). Mediates induction of hepatocyte prolifration by TGFA through phosphorylation of CEBPB. Is involved in cell cycle regulation by phosphorylating the CDK inhibitor CDKN1B, which promotes CDKN1B association with 14-3-3 proteins and prevents its translocation to the nucleus and inhibition of G1 progression. Phosphorylates EPHA2 at 'Ser-897', the RPS6KA-EPHA2 signaling pathway controls cell migration. In response to mTORC1 activation, phosphorylates EIF4B at 'Ser-406' and 'Ser-422' which stimulates bicarbonate cotransporter SLC4A7 mRNA translation, increasing SLC4A7 protein abundance and function. This Mus musculus (Mouse) protein is Ribosomal protein S6 kinase alpha-1 (Rps6ka1).